A 461-amino-acid polypeptide reads, in one-letter code: Argininosuccinate lyase (461 aa).

This sequence belongs to the lyase 1 family. Argininosuccinate lyase subfamily.

The protein resides in the cytoplasm. The enzyme catalyses 2-(N(omega)-L-arginino)succinate = fumarate + L-arginine. The protein operates within amino-acid biosynthesis; L-arginine biosynthesis; L-arginine from L-ornithine and carbamoyl phosphate: step 3/3. The polypeptide is Argininosuccinate lyase (Dehalococcoides mccartyi (strain ATCC BAA-2266 / KCTC 15142 / 195) (Dehalococcoides ethenogenes (strain 195))).